We begin with the raw amino-acid sequence, 358 residues long: Heme A synthase (358 aa).

The next 8 helical transmembrane spans lie at 22–42 (IQVW…VGGA), 107–127 (VLGR…WAIK), 133–153 (VLLQ…VGWW), 172–192 (LAFH…LSQG), 208–228 (FAGW…LVAG), 269–289 (FVHR…AFYV), 302–322 (AFFI…TLLQ), and 324–344 (VPIS…CFSV). H271 provides a ligand contact to heme. Residue H332 coordinates heme.

Belongs to the COX15/CtaA family. Type 2 subfamily. In terms of assembly, interacts with CtaB. It depends on heme b as a cofactor.

It is found in the cell membrane. It catalyses the reaction Fe(II)-heme o + 2 A + H2O = Fe(II)-heme a + 2 AH2. It functions in the pathway porphyrin-containing compound metabolism; heme A biosynthesis; heme A from heme O: step 1/1. In terms of biological role, catalyzes the conversion of heme O to heme A by two successive hydroxylations of the methyl group at C8. The first hydroxylation forms heme I, the second hydroxylation results in an unstable dihydroxymethyl group, which spontaneously dehydrates, resulting in the formyl group of heme A. This is Heme A synthase from Bartonella henselae (strain ATCC 49882 / DSM 28221 / CCUG 30454 / Houston 1) (Rochalimaea henselae).